The chain runs to 452 residues: Translation initiation factor eIF2B subunit gamma (452 aa).

At Met1 the chain carries N-acetylmethionine. Phosphoserine is present on Ser261.

Belongs to the eIF-2B gamma/epsilon subunits family. Component of the translation initiation factor 2B (eIF2B) complex which is a heterodecamer of two sets of five different subunits: alpha, beta, gamma, delta and epsilon. Subunits alpha, beta and delta comprise a regulatory subcomplex and subunits epsilon and gamma comprise a catalytic subcomplex. Within the complex, the hexameric regulatory complex resides at the center, with the two heterodimeric catalytic subcomplexes bound on opposite sides.

The protein resides in the cytoplasm. Its subcellular location is the cytosol. With respect to regulation, activated by the chemical integrated stress response (ISR) inhibitor ISRIB which stimulates guanine nucleotide exchange factor activity for both phosphorylated and unphosphorylated eIF2. Acts as a component of the translation initiation factor 2B (eIF2B) complex, which catalyzes the exchange of GDP for GTP on the eukaryotic initiation factor 2 (eIF2) complex gamma subunit. Its guanine nucleotide exchange factor activity is repressed when bound to eIF2 complex phosphorylated on the alpha subunit, thereby limiting the amount of methionyl-initiator methionine tRNA available to the ribosome and consequently global translation is repressed. This chain is Translation initiation factor eIF2B subunit gamma (EIF2B3), found in Bos taurus (Bovine).